We begin with the raw amino-acid sequence, 380 residues long: MKVFRQQLEQLGAQNQYRSIPDLIHQGRYITRENRKMLNMSSNDYLGLASDENLRRSFLQQYGGNFPSFTSSSSRLLTGNFPIYTDLEELVAQRFQRESALLFNSGYHANLGILPALTTTKSLILADKFVHASMIDGIRLSRCAFFRYRHNDYEHLKNLLEKNVGKFDRTFIVTESVFSMDGDVADLKQLVQLKKQFPNTYLYVDEAHAIGVYGQNGLGIAERDNLIAEIDLLVGTFGKALASVGAYAVCNQVLKECLINQMRPLIFSTALPPFNVAWTYFIFERLPQFSKERSHLEQLSAFLRREVAHRTQIMPSETCIVPYILGGNEATLAKAEYLQGQGYYCLPIGPPTVPKNTSRIRLSLTADMTTDEVRQFAACL.

A substrate-binding site is contributed by arginine 18. Residue 106-107 (GY) participates in pyridoxal 5'-phosphate binding. Substrate is bound at residue histidine 131. Pyridoxal 5'-phosphate contacts are provided by residues serine 179, 205–208 (DEAH), and 236–239 (TFGK). Residue lysine 239 is modified to N6-(pyridoxal phosphate)lysine. Threonine 352 lines the substrate pocket.

The protein belongs to the class-II pyridoxal-phosphate-dependent aminotransferase family. BioF subfamily. In terms of assembly, homodimer. It depends on pyridoxal 5'-phosphate as a cofactor.

It catalyses the reaction 6-carboxyhexanoyl-[ACP] + L-alanine + H(+) = (8S)-8-amino-7-oxononanoate + holo-[ACP] + CO2. It participates in cofactor biosynthesis; biotin biosynthesis. Catalyzes the decarboxylative condensation of pimeloyl-[acyl-carrier protein] and L-alanine to produce 8-amino-7-oxononanoate (AON), [acyl-carrier protein], and carbon dioxide. This is Putative 8-amino-7-oxononanoate synthase (bioF) from Neisseria gonorrhoeae (strain ATCC 700825 / FA 1090).